The primary structure comprises 250 residues: MADS-box protein J2 (250 aa).

The 61-residue stretch at 1–61 folds into the MADS-box domain; the sequence is MGRGRVELKR…GKLYEFSSAS (61 aa). In terms of domain architecture, K-box spans 87–177; sequence TQMNYNEYVR…KNKLEESAAR (91 aa).

It localises to the nucleus. MADS-box transcription factor that acts redundantly with EJ2 to control meristem maturation and inflorescence architecture. The sequence is that of MADS-box protein J2 from Solanum lycopersicum (Tomato).